A 66-amino-acid polypeptide reads, in one-letter code: Large ribosomal subunit protein bL35c (66 aa).

Belongs to the bacterial ribosomal protein bL35 family.

It is found in the plastid. The protein localises to the chloroplast. In Guillardia theta (Cryptophyte), this protein is Large ribosomal subunit protein bL35c.